A 29-amino-acid chain; its full sequence is MDTVSLAWAALMVVFTFSLSLVVWGRSGL.

Residues 3-23 (TVSLAWAALMVVFTFSLSLVV) traverse the membrane as a helical segment.

Belongs to the PetN family. The 4 large subunits of the cytochrome b6-f complex are cytochrome b6, subunit IV (17 kDa polypeptide, PetD), cytochrome f and the Rieske protein, while the 4 small subunits are PetG, PetL, PetM and PetN. The complex functions as a dimer.

The protein resides in the plastid. Its subcellular location is the chloroplast thylakoid membrane. In terms of biological role, component of the cytochrome b6-f complex, which mediates electron transfer between photosystem II (PSII) and photosystem I (PSI), cyclic electron flow around PSI, and state transitions. The protein is Cytochrome b6-f complex subunit 8 of Chloranthus spicatus (Chulantree).